A 483-amino-acid polypeptide reads, in one-letter code: Homoserine O-acetyltransferase (483 aa).

The region spanning 47–346 (NVILICHALT…HFGHDAFLLE (300 aa)) is the AB hydrolase-1 domain. The active-site Nucleophile is the S152. Substrate is bound at residue R221. Active-site residues include D307 and H340. Residue D341 participates in substrate binding. CBS domains lie at 367 to 423 (MSED…KISS) and 428 to 483 (LSRD…KGTK).

Belongs to the AB hydrolase superfamily. MetX family. As to quaternary structure, homodimer.

It localises to the cytoplasm. The enzyme catalyses L-homoserine + acetyl-CoA = O-acetyl-L-homoserine + CoA. It participates in amino-acid biosynthesis; L-methionine biosynthesis via de novo pathway; O-acetyl-L-homoserine from L-homoserine: step 1/1. Its function is as follows. Transfers an acetyl group from acetyl-CoA to L-homoserine, forming acetyl-L-homoserine. The protein is Homoserine O-acetyltransferase of Methanohalophilus mahii (strain ATCC 35705 / DSM 5219 / SLP).